We begin with the raw amino-acid sequence, 369 residues long: Flagellar P-ring protein (369 aa).

The N-terminal stretch at 1-24 (MSKTISLLKFIICILISLCSFTYA) is a signal peptide.

The protein belongs to the FlgI family. The basal body constitutes a major portion of the flagellar organelle and consists of four rings (L,P,S, and M) mounted on a central rod.

The protein resides in the bacterial flagellum basal body. Functionally, assembles around the rod to form the L-ring and probably protects the motor/basal body from shearing forces during rotation. In Buchnera aphidicola subsp. Schizaphis graminum (strain Sg), this protein is Flagellar P-ring protein.